A 194-amino-acid polypeptide reads, in one-letter code: Peptidyl-tRNA hydrolase (194 aa).

Y17 is a tRNA binding site. The active-site Proton acceptor is H22. TRNA-binding residues include F68, N70, and N116.

The protein belongs to the PTH family. As to quaternary structure, monomer.

Its subcellular location is the cytoplasm. The enzyme catalyses an N-acyl-L-alpha-aminoacyl-tRNA + H2O = an N-acyl-L-amino acid + a tRNA + H(+). Its function is as follows. Hydrolyzes ribosome-free peptidyl-tRNAs (with 1 or more amino acids incorporated), which drop off the ribosome during protein synthesis, or as a result of ribosome stalling. Catalyzes the release of premature peptidyl moieties from peptidyl-tRNA molecules trapped in stalled 50S ribosomal subunits, and thus maintains levels of free tRNAs and 50S ribosomes. The chain is Peptidyl-tRNA hydrolase from Haemophilus ducreyi (strain 35000HP / ATCC 700724).